The primary structure comprises 421 residues: Expansin-like protein DDB_G0293186 (421 aa).

The signal sequence occupies residues 1 to 20 (MRTLKLIILLILSTFKTINS). N19 carries an N-linked (GlcNAc...) asparagine glycan. An Expansin-like EG45 domain is found at 43–139 (GGQCGLPLPG…QKVSCGFSGY (97 aa)). 2 cysteine pairs are disulfide-bonded: C46–C70 and C73–C134. 2 N-linked (GlcNAc...) asparagine glycosylation sites follow: N117 and N391.

Belongs to the expansin family. Expansin A subfamily.

The protein resides in the secreted. Its function is as follows. May serve to lubricate the movement of the cellulose microfibrils during cell growth and wall extension and/or may serve to maintain the fluid state of the slug cell wall. The chain is Expansin-like protein DDB_G0293186 from Dictyostelium discoideum (Social amoeba).